The sequence spans 119 residues: Large ribosomal subunit protein bL20 (119 aa).

Belongs to the bacterial ribosomal protein bL20 family.

Its function is as follows. Binds directly to 23S ribosomal RNA and is necessary for the in vitro assembly process of the 50S ribosomal subunit. It is not involved in the protein synthesizing functions of that subunit. In Bordetella petrii (strain ATCC BAA-461 / DSM 12804 / CCUG 43448), this protein is Large ribosomal subunit protein bL20.